The following is a 553-amino-acid chain: Solute carrier family 45 member 3 (553 aa).

The next 11 helical transmembrane spans lie at Leu-19–Val-39, Phe-52–Gly-72, Phe-88–Trp-108, Leu-120–Phe-140, Phe-161–Ile-181, Cys-198–Thr-218, Phe-275–Phe-295, Met-323–Asp-343, Ser-353–His-373, Ala-382–Leu-402, and Ala-522–Val-542.

The protein belongs to the glycoside-pentoside-hexuronide (GPH) cation symporter transporter (TC 2.A.2) family. In terms of tissue distribution, expressed in the epididymis. Primarily expressed in the prostate, but also in other tissues.

It localises to the membrane. It carries out the reaction sucrose(out) + H(+)(out) = sucrose(in) + H(+)(in). Its function is as follows. Proton-associated sucrose transporter. May be able to transport also glucose and fructose. The chain is Solute carrier family 45 member 3 (Slc45a3) from Mus musculus (Mouse).